The sequence spans 513 residues: ATP synthase subunit alpha (513 aa).

An ATP-binding site is contributed by 169 to 176 (GDRQTGKT).

Belongs to the ATPase alpha/beta chains family. F-type ATPases have 2 components, CF(1) - the catalytic core - and CF(0) - the membrane proton channel. CF(1) has five subunits: alpha(3), beta(3), gamma(1), delta(1), epsilon(1). CF(0) has three main subunits: a(1), b(2) and c(9-12). The alpha and beta chains form an alternating ring which encloses part of the gamma chain. CF(1) is attached to CF(0) by a central stalk formed by the gamma and epsilon chains, while a peripheral stalk is formed by the delta and b chains.

It localises to the cell inner membrane. It carries out the reaction ATP + H2O + 4 H(+)(in) = ADP + phosphate + 5 H(+)(out). In terms of biological role, produces ATP from ADP in the presence of a proton gradient across the membrane. The alpha chain is a regulatory subunit. This Polynucleobacter necessarius subsp. necessarius (strain STIR1) protein is ATP synthase subunit alpha.